A 515-amino-acid polypeptide reads, in one-letter code: Pescadillo homolog (515 aa).

Residues 270–327 are a coiled coil; it reads EVLAALNHTLKIIQTQEEDLEVDEFPIDPNSEDAEAIQAQKEEETKLERLKNLFSECK. A BRCT domain is found at 318-411; the sequence is RLKNLFSECK…KLLPVEEYFP (94 aa). Residues 477–515 form a disordered region; that stretch reads RLYEKIMHSKKKKRSEVRKLESKRKVHDEEKAKKKLKSS. The span at 484-501 shows a compositional bias: basic residues; sequence HSKKKKRSEVRKLESKRK.

Belongs to the pescadillo family.

The protein resides in the nucleus. It localises to the nucleolus. Its subcellular location is the nucleoplasm. Required for maturation of ribosomal RNAs and formation of the large ribosomal subunit. This is Pescadillo homolog from Nematostella vectensis (Starlet sea anemone).